Here is a 274-residue protein sequence, read N- to C-terminus: 2,3,4,5-tetrahydropyridine-2,6-dicarboxylate N-succinyltransferase (274 aa).

Positions 106 and 143 each coordinate substrate.

The protein belongs to the transferase hexapeptide repeat family. Homotrimer.

Its subcellular location is the cytoplasm. It catalyses the reaction (S)-2,3,4,5-tetrahydrodipicolinate + succinyl-CoA + H2O = (S)-2-succinylamino-6-oxoheptanedioate + CoA. Its pathway is amino-acid biosynthesis; L-lysine biosynthesis via DAP pathway; LL-2,6-diaminopimelate from (S)-tetrahydrodipicolinate (succinylase route): step 1/3. The polypeptide is 2,3,4,5-tetrahydropyridine-2,6-dicarboxylate N-succinyltransferase (Rickettsia prowazekii (strain Madrid E)).